The chain runs to 59 residues: MAKLKITLKKSTNKAVKSQAATVKALGLGKIGTTVEQNDNPQIRGMIRKVSHLVCVEEI.

This sequence belongs to the universal ribosomal protein uL30 family. In terms of assembly, part of the 50S ribosomal subunit.

This is Large ribosomal subunit protein uL30 from Ruminiclostridium cellulolyticum (strain ATCC 35319 / DSM 5812 / JCM 6584 / H10) (Clostridium cellulolyticum).